A 333-amino-acid polypeptide reads, in one-letter code: MLGWIKRLIRMVFQQVGVSMQSVLWSRKPYGSSRSIVRKIGTNLSLIQCPRVQFQINSHATEWSPSHPGEDAVASFADVGWVAKEEGECSARLRTEVRSRPPLQDDLLFFEKAPSRQISLPDFSQEEPQLKTPALANEEALQKICALENELAALRAQIAKIVTQQEQQNLTAGDLDSTTFGTIPPHPLPPPPPPPPPPLGLHQSISAVDLIKERREKRANAGKTLVKNSPKKPEMPNMLEILKDMNSVKLRSVKRSEQDVKPKPVDATDPAALIAEALKKKFAYRYRSDSQDEVEKGVPKSESEATSERVLFGPHMLKPTGKMKALIENVSDS.

Phosphoserine is present on serine 119. The span at 286-307 (YRSDSQDEVEKGVPKSESEATS) shows a compositional bias: basic and acidic residues. The segment at 286 to 315 (YRSDSQDEVEKGVPKSESEATSERVLFGPH) is disordered.

It belongs to the MTFR1 family.

It localises to the mitochondrion. Its function is as follows. May play a role in mitochondrial aerobic respiration. May also regulate mitochondrial organization and fission. The chain is Mitochondrial fission regulator 1 (MTFR1) from Pongo abelii (Sumatran orangutan).